A 162-amino-acid chain; its full sequence is Lipoprotein signal peptidase (162 aa).

Helical transmembrane passes span 12-32 (WFAL…YFNS), 42-62 (VVEG…FSFL), 66-86 (GGWQ…WLGW), and 93-113 (FSGL…GNVI). Residues D123 and D142 contribute to the active site. Residues 133 to 153 (WYYPAFNLADSFICVGAALMV) traverse the membrane as a helical segment.

Belongs to the peptidase A8 family.

Its subcellular location is the cell inner membrane. The catalysed reaction is Release of signal peptides from bacterial membrane prolipoproteins. Hydrolyzes -Xaa-Yaa-Zaa-|-(S,diacylglyceryl)Cys-, in which Xaa is hydrophobic (preferably Leu), and Yaa (Ala or Ser) and Zaa (Gly or Ala) have small, neutral side chains.. It participates in protein modification; lipoprotein biosynthesis (signal peptide cleavage). Functionally, this protein specifically catalyzes the removal of signal peptides from prolipoproteins. This is Lipoprotein signal peptidase from Chromobacterium violaceum (strain ATCC 12472 / DSM 30191 / JCM 1249 / CCUG 213 / NBRC 12614 / NCIMB 9131 / NCTC 9757 / MK).